A 407-amino-acid polypeptide reads, in one-letter code: Peptidase T (407 aa).

Histidine 81 lines the Zn(2+) pocket. Residue aspartate 83 is part of the active site. Aspartate 142 serves as a coordination point for Zn(2+). Glutamate 176 (proton acceptor) is an active-site residue. Residues glutamate 177, aspartate 199, and histidine 381 each contribute to the Zn(2+) site.

The protein belongs to the peptidase M20B family. The cofactor is Zn(2+).

The protein resides in the cytoplasm. The catalysed reaction is Release of the N-terminal residue from a tripeptide.. In terms of biological role, cleaves the N-terminal amino acid of tripeptides. This Streptococcus pneumoniae (strain Taiwan19F-14) protein is Peptidase T.